The chain runs to 686 residues: Rhophilin-2 (686 aa).

An REM-1 domain is found at Asn-26 to Val-100. The interaction with Rho stretch occupies residues Gln-46 to Asn-66. A BRO1 domain is found at Pro-111 to Asp-460. The PDZ domain occupies Arg-515–Leu-593. Thr-655 carries the phosphothreonine modification.

Belongs to the RHPN family. As to quaternary structure, interacts with GTP-bound RhoA and RhoB. Interacts with both GTP- and GDP-bound RhoA. Interacts with KRT18. As to expression, mainly expressed in thyroid.

Its subcellular location is the cytoplasm. It localises to the perinuclear region. Binds specifically to GTP-Rho. May function in a Rho pathway to limit stress fiber formation and/or increase the turnover of F-actin structures in the absence of high levels of RhoA activity. The polypeptide is Rhophilin-2 (RHPN2) (Canis lupus familiaris (Dog)).